The primary structure comprises 250 residues: Cysteine proteinase inhibitor 12 (250 aa).

Residues 1 to 32 form the signal peptide; sequence MRVAATTRPASSSAAAPLPLFLLLAVAAAAAA. 2 consecutive Cystatin domains span residues 49–137 and 156–202; these read GGAH…RNTG and PGWR…AEVV. The short motif at 93 to 97 is the Secondary area of contact element; the sequence is QVVAG.

This sequence belongs to the cystatin family. Phytocystatin subfamily.

Its subcellular location is the secreted. Its function is as follows. Specific inhibitor of cysteine proteinases. Probably involved in the regulation of endogenous processes and in defense against pests and pathogens. The protein is Cysteine proteinase inhibitor 12 of Oryza sativa subsp. japonica (Rice).